Consider the following 196-residue polypeptide: Recombination protein RecR (196 aa).

A C4-type zinc finger spans residues Cys-57–Cys-72. In terms of domain architecture, Toprim spans Ser-80 to Pro-175.

The protein belongs to the RecR family.

Its function is as follows. May play a role in DNA repair. It seems to be involved in an RecBC-independent recombinational process of DNA repair. It may act with RecF and RecO. The sequence is that of Recombination protein RecR from Albidiferax ferrireducens (strain ATCC BAA-621 / DSM 15236 / T118) (Rhodoferax ferrireducens).